The following is a 435-amino-acid chain: Matrix extracellular phosphoglycoprotein (435 aa).

An N-terminal signal peptide occupies residues 1 to 16 (MQAVSVGLFLFSMTWA). Asparagine 71 is a glycosylation site (N-linked (GlcNAc...) asparagine). Disordered stretches follow at residues 124 to 145 (LLQNSPGQSKHTPRARRSTHYL) and 166 to 435 (LLVR…SSGD). The interval 164-186 (PDLLVRGDNDVPPFSGDGQHFMH) is dentonin. The Cell attachment site signature appears at 169–171 (RGD). Serine 178 is a glycosylation site (O-linked (Xyl...) (chondroitin sulfate) serine). Basic and acidic residues-rich tracts occupy residues 267–278 (KFRELPGKEGNR) and 300–313 (SKEKVKGGSREHTG). A compositionally biased stretch (polar residues) spans 337 to 346 (GNQVTLTESQ). Composition is skewed to basic residues over residues 382 to 391 (AHRRTSHPTR) and 405 to 415 (RRPHPHRRVST). The interval 418–435 (RDSSESSSSGSSSESSGD) is ASARM motif; interaction with PHEX. Low complexity predominate over residues 422-435 (ESSSSGSSSESSGD).

Belongs to the PF07175/osteoregulin family. Interacts (via ASARM motif) with PHEX; the interaction is zinc-dependent. Post-translationally, phosphorylated on serine residues in the ASARM motif; the phosphorylation is important for the inhibition of bone mineralization. Cleaved by CTSB/cathepsin B; the cleavage is blocked by metalloprotease PHEX. As to expression, expressed in osteoblasts and osteocytes.

It is found in the secreted. The protein resides in the extracellular space. The protein localises to the extracellular matrix. Regulates renal phosphate excretion. Regulates bone mineralization by osteoblasts and cartilage mineralization by chondrocytes. Regulates the mineralization of the extracellular matrix of the craniofacial complex, such as teeth, bone and cartilage. Increases dental pulp stem cell proliferation. The protein is Matrix extracellular phosphoglycoprotein of Rattus norvegicus (Rat).